The following is an 828-amino-acid chain: Periplasmic nitrate reductase (828 aa).

Positions 1–31 (MKLSRRSFMKANAVAAAAAAAGLSVPGVARA) form a signal peptide, tat-type signal. The region spanning 39 to 95 (IKWDKAPCRFCGTGCGVLVGTQQGRVVACQGDPDAPVNRGLNCIKGYFLPKIMYGKD) is the 4Fe-4S Mo/W bis-MGD-type domain. [4Fe-4S] cluster contacts are provided by Cys46, Cys49, Cys53, and Cys81. Mo-bis(molybdopterin guanine dinucleotide) contacts are provided by residues Lys83, Gln150, Asn175, Cys179, 212-219 (WGANMAEM), 243-247 (STYQH), 262-264 (QSD), Met372, Gln376, Asn482, 508-509 (SD), Lys531, Asp558, and 718-727 (TGRVLEHWHT). Residue Phe794 participates in substrate binding. The Mo-bis(molybdopterin guanine dinucleotide) site is built by Asn802 and Lys819.

It belongs to the prokaryotic molybdopterin-containing oxidoreductase family. NasA/NapA/NarB subfamily. In terms of assembly, component of the periplasmic nitrate reductase NapAB complex composed of NapA and NapB. Requires [4Fe-4S] cluster as cofactor. It depends on Mo-bis(molybdopterin guanine dinucleotide) as a cofactor. In terms of processing, predicted to be exported by the Tat system. The position of the signal peptide cleavage has not been experimentally proven.

The protein resides in the periplasm. The enzyme catalyses 2 Fe(II)-[cytochrome] + nitrate + 2 H(+) = 2 Fe(III)-[cytochrome] + nitrite + H2O. In terms of biological role, catalytic subunit of the periplasmic nitrate reductase complex NapAB. Receives electrons from NapB and catalyzes the reduction of nitrate to nitrite. The sequence is that of Periplasmic nitrate reductase from Shigella flexneri.